Here is a 210-residue protein sequence, read N- to C-terminus: Frataxin, mitochondrial (210 aa).

A mitochondrion-targeting transit peptide spans 1–41 (MWTFGRRAVAGLLASPSPAQAQTLARAPRLAELAQLCSRRG).

This sequence belongs to the frataxin family. As to quaternary structure, component of the mitochondrial core iron-sulfur cluster (ISC) complex composed of NFS1, LYRM4, NDUFAB1, ISCU, FXN, and FDX2; this complex is a heterohexamer containing two copies of each monomer. Homodimer. Monomer (probable predominant form). Oligomer. Monomers and polymeric aggregates of &gt;1 MDa have been isolated from mitochondria. A small fraction of heterologous overexpressed recombinant frataxin forms high-molecular weight aggregates that incorporate iron. Interacts with LYRM4. Interacts (via ferrous form) with ISCU; the interaction is possible when both are bound to the dimeric form of the cysteine desulfurase complex (NFS1:LYRM4) and the interaction enhances FXN interaction to the dimeric form of the cysteine desulfurase complex (NFS1:LYRM4). Interacts with FECH; one iron-bound FXN monomer seems to interact with a FECH homodimer. Interacts with SDHA and SDHB. Interacts with ACO2; the interaction is dependent on citrate. Interacts with HSPA9. In terms of assembly, interacts with ACO1. Interacts with ISCU (cytoplasmic form). Post-translationally, processed in two steps by mitochondrial processing peptidase (MPP). MPP first cleaves the precursor to intermediate form and subsequently converts the intermediate to yield frataxin mature form (frataxin(81-210)) which is the predominant form. The additional forms, frataxin(56-210) and frataxin(78-210), seem to be produced when the normal maturation process is impaired; their physiological relevance is unsure.

Its subcellular location is the mitochondrion. It is found in the cytoplasm. The protein localises to the cytosol. The enzyme catalyses 4 Fe(2+) + O2 + 4 H(+) = 4 Fe(3+) + 2 H2O. Functions as an activator of persulfide transfer to the scaffoding protein ISCU as component of the core iron-sulfur cluster (ISC) assembly complex and participates to the [2Fe-2S] cluster assembly. Accelerates sulfur transfer from NFS1 persulfide intermediate to ISCU and to small thiols such as L-cysteine and glutathione leading to persulfuration of these thiols and ultimately sulfide release. Binds ferrous ion and is released from FXN upon the addition of both L-cysteine and reduced FDX2 during [2Fe-2S] cluster assembly. The core iron-sulfur cluster (ISC) assembly complex is involved in the de novo synthesis of a [2Fe-2S] cluster, the first step of the mitochondrial iron-sulfur protein biogenesis. This process is initiated by the cysteine desulfurase complex (NFS1:LYRM4:NDUFAB1) that produces persulfide which is delivered on the scaffold protein ISCU in a FXN-dependent manner. Then this complex is stabilized by FDX2 which provides reducing equivalents to accomplish the [2Fe-2S] cluster assembly. Finally, the [2Fe-2S] cluster is transferred from ISCU to chaperone proteins, including HSCB, HSPA9 and GLRX5. May play a role in the protection against iron-catalyzed oxidative stress through its ability to catalyze the oxidation of Fe(2+) to Fe(3+); the oligomeric form but not the monomeric form has in vitro ferroxidase activity. May be able to store large amounts of iron in the form of a ferrihydrite mineral by oligomerization; however, the physiological relevance is unsure as reports are conflicting and the function has only been shown using heterologous overexpression systems. May function as an iron chaperone protein that protects the aconitase [4Fe-4S]2+ cluster from disassembly and promotes enzyme reactivation. May play a role as a high affinity iron binding partner for FECH that is capable of both delivering iron to ferrochelatase and mediating the terminal step in mitochondrial heme biosynthesis. Functionally, modulates the RNA-binding activity of ACO1. May be involved in the cytoplasmic iron-sulfur protein biogenesis. May contribute to oxidative stress resistance and overall cell survival. This Macaca fascicularis (Crab-eating macaque) protein is Frataxin, mitochondrial.